The sequence spans 99 residues: Acylphosphatase-1 (99 aa).

The Acylphosphatase-like domain maps to 9–99 (SVDYEVFGKV…LEHSTFSICK (91 aa)). Active-site residues include Arg24 and Asn42.

It belongs to the acylphosphatase family.

The enzyme catalyses an acyl phosphate + H2O = a carboxylate + phosphate + H(+). This Xenopus laevis (African clawed frog) protein is Acylphosphatase-1 (acyp1).